Consider the following 139-residue polypeptide: MPRPIRCRRVEFLPKFKYFSPAQGTSDEVTLKIEELEAIRLKDLEGLMQEECAQKMQVSRQTFQLILEEARKKIADALVHGKAIRIEGGNYVYGKCSYICLNCGKVFDSDYHECPECHSKDIGCTRGRGRCYCFGHGRR.

The protein belongs to the UPF0251 family.

The protein is UPF0251 protein Csac_0224 of Caldicellulosiruptor saccharolyticus (strain ATCC 43494 / DSM 8903 / Tp8T 6331).